Consider the following 471-residue polypeptide: Ribulose bisphosphate carboxylase large chain (471 aa).

2 residues coordinate substrate: Asn115 and Thr165. Catalysis depends on Lys167, which acts as the Proton acceptor. Lys169 is a substrate binding site. Mg(2+)-binding residues include Lys193, Asp195, and Glu196. The residue at position 193 (Lys193) is an N6-carboxylysine. His286 functions as the Proton acceptor in the catalytic mechanism. Substrate is bound by residues Arg287, His319, and Ser371.

This sequence belongs to the RuBisCO large chain family. Type I subfamily. Heterohexadecamer of 8 large chains and 8 small chains. The cofactor is Mg(2+).

It is found in the carboxysome. The enzyme catalyses 2 (2R)-3-phosphoglycerate + 2 H(+) = D-ribulose 1,5-bisphosphate + CO2 + H2O. The catalysed reaction is D-ribulose 1,5-bisphosphate + O2 = 2-phosphoglycolate + (2R)-3-phosphoglycerate + 2 H(+). In terms of biological role, ruBisCO catalyzes two reactions: the carboxylation of D-ribulose 1,5-bisphosphate, the primary event in carbon dioxide fixation, as well as the oxidative fragmentation of the pentose substrate in the photorespiration process. Both reactions occur simultaneously and in competition at the same active site. The polypeptide is Ribulose bisphosphate carboxylase large chain (Prochlorococcus marinus (strain MIT 9301)).